We begin with the raw amino-acid sequence, 471 residues long: GTPase Der (471 aa).

EngA-type G domains lie at 5–168 (PVIA…TDLE) and 186–359 (IRVA…DSAF). GTP-binding positions include 11-18 (GRPNVGKS), 58-62 (DTGGI), 120-123 (NKTD), 192-199 (GRPNVGKS), 239-243 (DTAGV), and 304-307 (NKWD). The 85-residue stretch at 360–444 (IKIGTNELTR…PIRLEFKSGT (85 aa)) folds into the KH-like domain.

It belongs to the TRAFAC class TrmE-Era-EngA-EngB-Septin-like GTPase superfamily. EngA (Der) GTPase family. In terms of assembly, associates with the 50S ribosomal subunit.

Functionally, GTPase that plays an essential role in the late steps of ribosome biogenesis. This Alcanivorax borkumensis (strain ATCC 700651 / DSM 11573 / NCIMB 13689 / SK2) protein is GTPase Der.